We begin with the raw amino-acid sequence, 712 residues long: Polyphosphate kinase (712 aa).

Asn-49 contacts ATP. Mg(2+) is bound by residues Arg-398 and Arg-428. The Phosphohistidine intermediate role is filled by His-458. ATP contacts are provided by Tyr-491, Arg-587, and His-615.

The protein belongs to the polyphosphate kinase 1 (PPK1) family. It depends on Mg(2+) as a cofactor. In terms of processing, an intermediate of this reaction is the autophosphorylated ppk in which a phosphate is covalently linked to a histidine residue through a N-P bond.

It carries out the reaction [phosphate](n) + ATP = [phosphate](n+1) + ADP. In terms of biological role, catalyzes the reversible transfer of the terminal phosphate of ATP to form a long-chain polyphosphate (polyP). The polypeptide is Polyphosphate kinase (Parasynechococcus marenigrum (strain WH8102)).